The sequence spans 144 residues: Sentan (144 aa).

The disordered stretch occupies residues 1-31; the sequence is MCGCRASVPSTKHYSVNPAPTTRSPPAAAGM. Over residues 18 to 29 the composition is skewed to low complexity; that stretch reads PAPTTRSPPAAA.

Belongs to the S-100 family.

It localises to the cell projection. Its subcellular location is the cilium. In terms of biological role, may be a component of the linker structure that bridges the ciliary membrane and peripheral singlet microtubules. In Gallus gallus (Chicken), this protein is Sentan.